A 489-amino-acid polypeptide reads, in one-letter code: Occludin (489 aa).

Residues 1-51 lie on the Cytoplasmic side of the membrane; it reads MMYEKRSYTGYGHPSSHYDYPPPSGPPGSFYLADVPPQHFYQWRSPPGIVR. An MARVEL domain is found at 45 to 248; the sequence is SPPGIVRILQ…ICYFAQKTRH (204 aa). The chain crosses the membrane as a helical span at residues 52–74; that stretch reads ILQGSVVILCLVIFACVASTLAW. Over 75 to 112 the chain is Extracellular; that stretch reads EYYGSGGLLGYGGGLGSYYNGYYGGYNGYYYGGLTNPR. Residues 113–137 traverse the membrane as a helical segment; sequence AANGFMIAMAVLCFLVTLGLVIAGL. At 138–147 the chain is on the cytoplasmic side; sequence SKASGARSRR. Residues 148-172 form a helical membrane-spanning segment; the sequence is FYLLVAVLSGLLAFVMLIASIVYVV. Topologically, residues 173–222 are extracellular; it reads GVNPRAGLGASSGSLYYNQMLMLCNQMMSPVAGGIMNQYLYHYCMVDPQE. A disulfide bridge links Cys-196 with Cys-216. A helical membrane pass occupies residues 223–244; it reads AVAIVCGFLTVILLCVICYFAQ. Topologically, residues 245–489 are cytoplasmic; the sequence is KTRHKIWKYG…MVGGYDQSRS (245 aa). Ser-280 bears the Phosphoserine mark. Thr-285 bears the Phosphothreonine mark. Ser-300 carries the phosphoserine modification. Residues 308–382 are disordered; sequence PAQENGYGHS…ESSGEQNRDD (75 aa). Residues 322 to 332 are compositionally biased toward pro residues; that stretch reads PSVPPPEGPSP. A compositionally biased stretch (basic residues) spans 345-354; it reads PARRGHRQRP. Phosphotyrosine is present on residues Tyr-364 and Tyr-368. Residues 365-377 show a composition bias toward polar residues; the sequence is ETDYTTAAESSGE. Phosphothreonine; by PKC/PRKCH is present on residues Thr-369 and Thr-370. Residue Ser-374 is modified to Phosphoserine. The OCEL domain occupies 381–489; sequence DDWASLYPPI…MVGGYDQSRS (109 aa). Residues 407 to 434 adopt a coiled-coil conformation; that stretch reads LQRYKALCAEMDDIGTQLRQLSHELDCL. Position 457 is a phosphoserine (Ser-457).

This sequence belongs to the ELL/occludin family. In terms of assembly, interacts with TJP1/ZO1. Interacts with VAPA. Interacts with CLDN1, CLDN6, CLDN9, CLDN11, CLDN12 and CLDN17. Interacts with PLSCR1. Interacts with LSR, ILDR1 and ILDR2. Interacts with TJP2/ZO2. Post-translationally, dephosphorylated by PTPRJ. As to expression, localized at tight junctions of both epithelial and endothelial cells.

The protein resides in the cell membrane. It is found in the cell junction. It localises to the tight junction. Its function is as follows. May play a role in the formation and regulation of the tight junction (TJ) paracellular permeability barrier. The sequence is that of Occludin (OCLN) from Potorous tridactylus (Potoroo).